Consider the following 353-residue polypeptide: Keratocan (353 aa).

Residues 1–21 form the signal peptide; that stretch reads MMTLKVCPSLLLLFLVHSVWT. In terms of domain architecture, LRRNT spans 34-72; sequence EHWSHYTFECPQECFCPPSFPNALYCDNKGLKEIPAIPA. 2 disulfides stabilise this stretch: cysteine 43/cysteine 49 and cysteine 47/cysteine 59. 10 LRR repeats span residues 73 to 94, 97 to 118, 123 to 143, 144 to 165, 168 to 188, 194 to 214, 215 to 236, 239 to 262, 264 to 283, and 284 to 305; these read RIWYLYLQNNLIETISEKPFVN, HLRWINLNKNKITNNGIESGVL, RLLYLFLEDNELEEVPAPLPV, GLEQLRLARNKISRIPEGVFSN, NLTMLDLHQNNLLDSALQSDT, SLMQLNIAKNSLKKMPLSIPA, NTLQLFLDNNSIEVIPENYFSA, KVTFLRLNYNKLSDDGIPPNGFNV, SILDLQLSHNQLTKIPPINA, and HLEHLHLDHNRIKSVNGTQICP. The N-linked (GlcNAc...) (keratan sulfate) asparagine glycan is linked to asparagine 94. Asparagine 168 carries N-linked (GlcNAc...) asparagine glycosylation. Residues asparagine 223 and asparagine 261 are each glycosylated (N-linked (GlcNAc...) (keratan sulfate) asparagine). An N-linked (GlcNAc...) asparagine glycan is attached at asparagine 299. The cysteines at positions 304 and 344 are disulfide-linked.

This sequence belongs to the small leucine-rich proteoglycan (SLRP) family. SLRP class II subfamily. In terms of processing, binds keratan sulfate chains.

It localises to the secreted. It is found in the extracellular space. Its subcellular location is the extracellular matrix. Its function is as follows. Plays an important role in generating and maintaining a transparent matrix within the corneal stroma. This Gallus gallus (Chicken) protein is Keratocan (KERA).